We begin with the raw amino-acid sequence, 172 residues long: Ribosome maturation factor RimM (172 aa).

The PRC barrel domain occupies 96–168 (DGEFYYHEII…RVDVELLEGL (73 aa)).

It belongs to the RimM family. Binds ribosomal protein uS19.

The protein resides in the cytoplasm. Functionally, an accessory protein needed during the final step in the assembly of 30S ribosomal subunit, possibly for assembly of the head region. Essential for efficient processing of 16S rRNA. May be needed both before and after RbfA during the maturation of 16S rRNA. It has affinity for free ribosomal 30S subunits but not for 70S ribosomes. This Streptococcus suis (strain 05ZYH33) protein is Ribosome maturation factor RimM.